Consider the following 154-residue polypeptide: Photosystem II extrinsic protein U, chloroplastic (154 aa).

The N-terminal 36 residues, 1 to 36, are a transit peptide targeting the chloroplast; it reads MAFISTPLGKVTVKSATVSANRRGLRMQSDSEPVVS. The N-terminal 25 residues, 37-61, are a transit peptide targeting the thylakoid; that stretch reads RRALLSGALAAAVAAALARARPAQA.

It belongs to the PsbU family. PSII is composed of 1 copy each of membrane proteins PsbA, PsbB, PsbC, PsbD, PsbE, PsbF, PsbH, PsbI, PsbJ, PsbK, PsbL, PsbM, PsbT, PsbY, PsbZ, Psb30/Ycf12, at least 3 peripheral proteins of the oxygen-evolving complex and a large number of cofactors. It forms dimeric complexes. The extrinsic subunits in red algae are PsbO (OEC33), PsbQ', cytochrome c-550 and PsbU. Post-translationally, predicted to be translocated into the thylakoid lumen by the Tat system. The position of the first transit peptide cleavage has not been experimentally proven.

The protein resides in the plastid. It is found in the chloroplast thylakoid membrane. Its function is as follows. One of the extrinsic, lumenal subunits of photosystem II (PSII). PSII is a light-driven water plastoquinone oxidoreductase, using light energy to abstract electrons from H(2)O, generating a proton gradient subsequently used for ATP formation. The extrinsic proteins stabilize the structure of photosystem II oxygen-evolving complex (OEC), the ion environment of oxygen evolution and protect the OEC against heat-induced inactivation. In Cyanidium caldarium (Red alga), this protein is Photosystem II extrinsic protein U, chloroplastic.